A 182-amino-acid polypeptide reads, in one-letter code: uncharacterized protein (182 aa).

The N-acetyltransferase domain occupies 55-182 (VNLHDLEKLC…GVKGMFWYPL (128 aa)).

This sequence belongs to the acetyltransferase family. Ycf52 subfamily.

Its subcellular location is the plastid. It is found in the chloroplast. This is an uncharacterized protein from Gracilaria tenuistipitata var. liui (Red alga).